The following is a 349-amino-acid chain: Neutral protease 2 homolog ACLA_052720 (349 aa).

The signal sequence occupies residues 1-19 (MQLTVLASAILALAQGALA). Residues 20 to 172 (IPAKAPALDV…PAAINLLDRR (153 aa)) constitute a propeptide that is removed on maturation. 2 cysteine pairs are disulfide-bonded: cysteine 178-cysteine 250 and cysteine 257-cysteine 275. Histidine 300 contacts Zn(2+). Glutamate 301 is a catalytic residue. Histidine 304 and aspartate 315 together coordinate Zn(2+).

Belongs to the peptidase M35 family. Requires Zn(2+) as cofactor.

The protein resides in the secreted. It catalyses the reaction Preferential cleavage of bonds with hydrophobic residues in P1'. Also 3-Asn-|-Gln-4 and 8-Gly-|-Ser-9 bonds in insulin B chain.. In terms of biological role, secreted metalloproteinase that allows assimilation of proteinaceous substrates. Shows high activities on basic nuclear substrates such as histone and protamine. The polypeptide is Neutral protease 2 homolog ACLA_052720 (Aspergillus clavatus (strain ATCC 1007 / CBS 513.65 / DSM 816 / NCTC 3887 / NRRL 1 / QM 1276 / 107)).